An 81-amino-acid polypeptide reads, in one-letter code: Elsinochrome C biosynthesis cluster protein SNOG_08613 (81 aa).

In terms of biological role, part of the gene cluster that mediates the biosynthesis of elsinochrome C, a perelyenequinone phytotoxin structurally similar to cercosporin. The first step of elsinochrome C biosynthesis is performed by the polyketide synthase elcA which catalyzes the formation of nor-toralactone. The starter unit acyltransferase (SAT) domain of elcA initiates polyketide extension by the selective utilization of acetyl-CoA, which is elongated to the heptaketide in the beta-ketoacyl synthase (KS) domain by successive condensations with six malonyl units introduced by the malonyl acyltransferase (MAT) domain. The product template (PT) domain catalyzes C4-C9 and C2-C11 aldol cyclizations and dehydrations to a trihydroxynaphthalene, which is thought to be delivered to the thioesterase (TE) domain for product release. The bifunctional enzyme elcB then methylates nor-toralactone to toralactone before conducting an unusual oxidative aromatic ring opening. The next step in perylenequinone biosynthesis is an O-methylation at the nascent OH-6 of the elcB product performed by the O-methyltransferase elcD. The oxidative coupling of the two monomeric naphthol units in perylenequinone biosynthesis is catalyzed by the FAD-dependent monooxygenase elcE and the multicopper oxidase elcG. ElcG might catalyze the first intermolecular coupling in a regio- and stereo-selective manner via a phenol radical coupling mechanism and the elcE could forge the second C-C bond intramolecularly via a hydride transfer mechanism. The fasciclin domain-containing protein elcF might also play a role duting this step. The last piece of the puzzle in the biosynthesis of elsinochrome C is the additional annulation by enolate coupling to afford the dihydrobenzo(ghi)perylenequinone system, catalyzed by the FAD-dependent monooxygenase elcH. This is Elsinochrome C biosynthesis cluster protein SNOG_08613 from Phaeosphaeria nodorum (strain SN15 / ATCC MYA-4574 / FGSC 10173) (Glume blotch fungus).